Consider the following 556-residue polypeptide: Formate--tetrahydrofolate ligase (556 aa).

An ATP-binding site is contributed by 64-71; sequence TPAGEGKT.

It belongs to the formate--tetrahydrofolate ligase family.

It catalyses the reaction (6S)-5,6,7,8-tetrahydrofolate + formate + ATP = (6R)-10-formyltetrahydrofolate + ADP + phosphate. The protein operates within one-carbon metabolism; tetrahydrofolate interconversion. This Haemophilus ducreyi (strain 35000HP / ATCC 700724) protein is Formate--tetrahydrofolate ligase.